The sequence spans 959 residues: MSPVATTTSVTPDVISSLKTSFSAGQTSYIPSTLFDVLSYAAERYPSHELGFITSSAHDSSIQTKTFSLFNAQVRNLGRALLDLNKPAGSIIVVYLTEHEDNMAAVWACLLAGYVPCLQPALSAQQAHKEGHVAHIKNLFGSATWLTNEAGAEQVSSIAGLEIHLLSELKIAAEGYSVSADWTARTVQPDDEAILFLTSGSTGFSKAVVHTHRTILAACYAKGEAYGLTSESNILNWVGFDHVAGSLEMHIAPLLYGASQLHVHASAILSDPLRFLQLIDEKSINVAFAPNFLLAKLTRDLEKKTELFGSFDLSSVTRINSGGEAVVSKTAKAFVATLKNLSRDPSKVSFVISPGFGMTETCAGCIYNPADVSTSEPNYEFLELGTPITGCEMRIVNPEDGVTPRVDGESGELQVRGPMVFSRYYNNAEATASSFVEGGWYRTGDVGIVENGVMRLSGRIKETVIVHGVSYGIPELETYLQTVEGVTHSFLAAAPYRAPGQETEGFIIFYAPTFDLYGEDASSKLFATHRALRDISVKMITLPPQHIVPIPVNQMEKTTLGKLSRARLTGLFKQGELAKHIARAEELLSEARGASFVTPQTETEQTLAAIYAGIFNLEVADVSATDNFFELGGTSIDVIRLKREGEAAFDLPEIPTIQILKHPVVSSLANYIVALKTKGVNAEEYDPIVPLQLTGKKTPIFMVHPGVGEVLIFVNLAKYFQNERPFYALRARGFEPGQPFFTSMDEMVSCYAAAVKRTQAHGPYAIAGYSYGGVVAFEVAKRLEAMGEEVKFTGLINIPPHIADRMHEIDWTGGMLNLSYFLGLVSKQDANDLAPSMRPLTRKEQLEIVWKLSPPERLVELQLTPEKLDHWVDIAGSLIECGKEYNPGGSVSALDVFYAIPLRGSKEDWLNKQLKPWEEFSRGATSYTDVPGQHYTLMDFDHVPGFQKIFRSRLEARGL.

The tract at residues 59-466 (DSSIQTKTFS…SGRIKETVIV (408 aa)) is adenylation (A) domain. One can recognise a Carrier domain in the interval 598-676 (TPQTETEQTL…SLANYIVALK (79 aa)). The thiolation and peptide carrier (T) domain stretch occupies residues 603–673 (TEQTLAAIYA…VVSSLANYIV (71 aa)). Ser635 is subject to O-(pantetheine 4'-phosphoryl)serine. The tract at residues 699–946 (PIFMVHPGVG…LMDFDHVPGF (248 aa)) is thioesterase (TE) domain.

Belongs to the ATP-dependent AMP-binding enzyme family.

The protein operates within secondary metabolite biosynthesis. An L-tyrosine:2-oxoglutarate aminotransferase (probably invD) and atromentin synthetase invA1 catalyze consecutive steps to turn over L-tyrosine into atromentin, which represents the generic precursor molecule for the entire terphenylquinone and pulvinic acid family of pigments, which are widely distributed secondary metabolites in homobasidiomycetes. The first step catalyzed by the aminotransferase converts L-tyrosine in to 4-hydroxyphenylpyruvate (4-HPP). Adenylation of two 4-HPP monomers by the invA1 adenylation (A) domain, covalent tethering of the monomers as a thioester and oxoester onto the invA1 thiolation (T) and thioesterase (TE) domains, respectively, and symmetric C-C-bond formation between two monomers catalyzed by the invA1 TE domain leads to atromentin. The sequence is that of Atromentin synthetase invA1 (invA1) from Paxillus involutus (Naked brimcap).